The chain runs to 191 residues: Molybdenum cofactor guanylyltransferase (191 aa).

GTP-binding positions include 13–15 (LAG), Lys26, Asp72, and Asp102. Asp102 is a binding site for Mg(2+).

It belongs to the MobA family. Monomer. Requires Mg(2+) as cofactor.

It is found in the cytoplasm. The catalysed reaction is Mo-molybdopterin + GTP + H(+) = Mo-molybdopterin guanine dinucleotide + diphosphate. Transfers a GMP moiety from GTP to Mo-molybdopterin (Mo-MPT) cofactor (Moco or molybdenum cofactor) to form Mo-molybdopterin guanine dinucleotide (Mo-MGD) cofactor. The sequence is that of Molybdenum cofactor guanylyltransferase from Pseudomonas putida (strain GB-1).